Consider the following 366-residue polypeptide: Polyamine aminopropyltransferase 2 (366 aa).

Over residues 20–58 the composition is skewed to basic and acidic residues; the sequence is KDKRSELDSDKFELEQQDKHDIQDKQDKQDEQNKQDKQV. The interval 20-61 is disordered; that stretch reads KDKRSELDSDKFELEQQDKHDIQDKQDKQDEQNKQDKQVQSE. The PABS domain maps to 74–305; that stretch reads DVWDEISLKE…TDWGFHLATN (232 aa). Glutamine 100 contributes to the S-methyl-5'-thioadenosine binding site. Residues histidine 129 and aspartate 153 each coordinate spermidine. Residues aspartate 173 and 207–208 each bind S-methyl-5'-thioadenosine; that span reads DA. The Proton acceptor role is filled by aspartate 225.

The protein belongs to the spermidine/spermine synthase family. As to quaternary structure, homodimer or homotetramer.

The protein resides in the cytoplasm. The catalysed reaction is S-adenosyl 3-(methylsulfanyl)propylamine + putrescine = S-methyl-5'-thioadenosine + spermidine + H(+). It functions in the pathway amine and polyamine biosynthesis; spermidine biosynthesis; spermidine from putrescine: step 1/1. Functionally, catalyzes the irreversible transfer of a propylamine group from the amino donor S-adenosylmethioninamine (decarboxy-AdoMet) to putrescine (1,4-diaminobutane) to yield spermidine. The chain is Polyamine aminopropyltransferase 2 from Bacillus cereus (strain ATCC 14579 / DSM 31 / CCUG 7414 / JCM 2152 / NBRC 15305 / NCIMB 9373 / NCTC 2599 / NRRL B-3711).